We begin with the raw amino-acid sequence, 614 residues long: Type VII secretion system protein EssD (614 aa).

A disordered region spans residues 417–445 (QNHVTHGPKDSMVRSEGKHSISSHEMNSS). Residues 423–435 (GPKDSMVRSEGKH) show a composition bias toward basic and acidic residues.

It belongs to the EssD family. In terms of assembly, interacts (via C-terminal) with EssG; this interaction blocks EssD activity. Interacts with EssE.

It is found in the secreted. The protein resides in the cell membrane. In terms of biological role, component of the type VII secretion system (Ess). Plays a role in Ess secretion during infection. Required for the efficient secretion of EsxA. Required for abscess formation and staphylococcal persistence in host tissues. Possesses a toxic DNase activity that is modulated by EsaG by forming a nuclease toxin-antitoxin pair. This nuclease toxin targets competitor bacteria. The chain is Type VII secretion system protein EssD from Staphylococcus aureus (strain USA300).